The primary structure comprises 1221 residues: DNA-directed RNA polymerase subunit beta (1221 aa).

The disordered stretch occupies residues 1176–1221 (EKKKLAEEEAEIAAEAEAEGSAEEDAAEADADANEAETADDDKASK). Positions 1183–1215 (EEAEIAAEAEAEGSAEEDAAEADADANEAETAD) are enriched in acidic residues.

The protein belongs to the RNA polymerase beta chain family. As to quaternary structure, the RNAP catalytic core consists of 2 alpha, 1 beta, 1 beta' and 1 omega subunit. When a sigma factor is associated with the core the holoenzyme is formed, which can initiate transcription.

The catalysed reaction is RNA(n) + a ribonucleoside 5'-triphosphate = RNA(n+1) + diphosphate. DNA-dependent RNA polymerase catalyzes the transcription of DNA into RNA using the four ribonucleoside triphosphates as substrates. The sequence is that of DNA-directed RNA polymerase subunit beta from Lactobacillus delbrueckii subsp. bulgaricus (strain ATCC BAA-365 / Lb-18).